An 800-amino-acid polypeptide reads, in one-letter code: Nucleolar RNA helicase 2-B (800 aa).

The span at 1 to 14 (MPGKVYTDEMEGKS) shows a compositional bias: basic and acidic residues. Residues 1 to 200 (MPGKVYTDEM…TDTSEITAAN (200 aa)) form a disordered region. A compositionally biased stretch (polar residues) spans 114-124 (ETNISLSSQGG). A Q motif motif is present at residues 221–249 (GDFSKFPISKDTIKNLQAKGVTYLFPIQS). Positions 252-431 (FHTVYSGKDV…KKYMRKQYEK (180 aa)) constitute a Helicase ATP-binding domain. 265 to 272 (ARTGTGKT) contributes to the ATP binding site. The DEAD box motif lies at 374–377 (DEVD). One can recognise a Helicase C-terminal domain in the interval 464-620 (DIVQVYSGSH…SSADAIKSLD (157 aa)). The disordered stretch occupies residues 750–800 (IQESERSFDGPRNRSFGGRGRRPFDRRNNSRNSSGGGGGRRGRSGGFRRGR). The segment covering 752-761 (ESERSFDGPR) has biased composition (basic and acidic residues). A compositionally biased stretch (basic residues) spans 789–800 (RRGRSGGFRRGR).

Belongs to the DEAD box helicase family. DDX21/DDX50 subfamily. As to expression, widely expressed. Expressed at higher level in stomach. Expressed at lower level compared to ddx21-a.

The protein localises to the nucleus. The protein resides in the nucleolus. Its subcellular location is the nucleoplasm. It localises to the cytoplasm. It is found in the cytosol. The protein localises to the mitochondrion. It carries out the reaction ATP + H2O = ADP + phosphate + H(+). RNA helicase that acts as a sensor of the transcriptional status of both RNA polymerase (Pol) I and II: promotes ribosomal RNA (rRNA) processing and transcription from polymerase II (Pol II). Binds various RNAs, such as rRNAs, snoRNAs, 7SK and, at lower extent, mRNAs. In the nucleolus, localizes to rDNA locus, where it directly binds rRNAs and snoRNAs, and promotes rRNA transcription, processing and modification. Required for rRNA 2'-O-methylation, possibly by promoting the recruitment of late-acting snoRNAs SNORD56 and SNORD58 with pre-ribosomal complexes. In the nucleoplasm, binds 7SK RNA and is recruited to the promoters of Pol II-transcribed genes: acts by facilitating the release of P-TEFb from inhibitory 7SK snRNP in a manner that is dependent on its helicase activity, thereby promoting transcription of its target genes. Required to prevent R-loop-associated DNA damage and transcription-associated genomic instability. The polypeptide is Nucleolar RNA helicase 2-B (ddx21-b) (Xenopus laevis (African clawed frog)).